Reading from the N-terminus, the 76-residue chain is UPF0248 protein MmarC5_1387 (76 aa).

Belongs to the UPF0248 family.

The sequence is that of UPF0248 protein MmarC5_1387 from Methanococcus maripaludis (strain C5 / ATCC BAA-1333).